Consider the following 368-residue polypeptide: Flagellar P-ring protein (368 aa).

Positions 1–24 (MDKPMKRIFVVLVILLVLPQLALA) are cleaved as a signal peptide.

This sequence belongs to the FlgI family. As to quaternary structure, the basal body constitutes a major portion of the flagellar organelle and consists of four rings (L,P,S, and M) mounted on a central rod.

The protein localises to the periplasm. Its subcellular location is the bacterial flagellum basal body. Its function is as follows. Assembles around the rod to form the L-ring and probably protects the motor/basal body from shearing forces during rotation. The polypeptide is Flagellar P-ring protein (Geobacter sulfurreducens (strain ATCC 51573 / DSM 12127 / PCA)).